Reading from the N-terminus, the 145-residue chain is Large ribosomal subunit protein uL15 (145 aa).

Residues 1–55 (MSLLKTLAPKAGSKHAPKRIGRGIGSGMGGTATKGHKGQLARTGGTVRRGFEGGQ) form a disordered region. Basic residues predominate over residues 12–21 (GSKHAPKRIG). Residues 22-32 (RGIGSGMGGTA) are compositionally biased toward gly residues.

It belongs to the universal ribosomal protein uL15 family. In terms of assembly, part of the 50S ribosomal subunit.

Functionally, binds to the 23S rRNA. This is Large ribosomal subunit protein uL15 from Bdellovibrio bacteriovorus (strain ATCC 15356 / DSM 50701 / NCIMB 9529 / HD100).